A 118-amino-acid chain; its full sequence is NADH-ubiquinone oxidoreductase chain 3 (118 aa).

Helical transmembrane passes span 7–27 (ICIS…VPFL), 62–82 (LVSI…PWAV), and 87–107 (IDLF…IGFL).

It belongs to the complex I subunit 3 family.

It is found in the mitochondrion membrane. The enzyme catalyses a ubiquinone + NADH + 5 H(+)(in) = a ubiquinol + NAD(+) + 4 H(+)(out). Its function is as follows. Core subunit of the mitochondrial membrane respiratory chain NADH dehydrogenase (Complex I) that is believed to belong to the minimal assembly required for catalysis. Complex I functions in the transfer of electrons from NADH to the respiratory chain. The immediate electron acceptor for the enzyme is believed to be ubiquinone. This Oenothera berteroana (Bertero's evening primrose) protein is NADH-ubiquinone oxidoreductase chain 3 (ND3).